The following is a 408-amino-acid chain: DNA replication and repair protein RecF (408 aa).

Residue 30-37 (GSNGQGKT) coordinates ATP. 2 disordered regions span residues 220 to 252 (DHGP…DGGR) and 389 to 408 (SPTP…GGAA). The segment covering 389–402 (SPTPASASEPASPG) has biased composition (low complexity).

It belongs to the RecF family.

It localises to the cytoplasm. Functionally, the RecF protein is involved in DNA metabolism; it is required for DNA replication and normal SOS inducibility. RecF binds preferentially to single-stranded, linear DNA. It also seems to bind ATP. The sequence is that of DNA replication and repair protein RecF from Clavibacter sepedonicus (Clavibacter michiganensis subsp. sepedonicus).